The sequence spans 224 residues: Cutinase 1 (224 aa).

Positions 1–16 (MKFLSVLSLAITLAAA) are cleaved as a signal peptide. Cys46 and Cys125 form a disulfide bridge. Residue Ser136 is the Nucleophile of the active site. The cysteines at positions 187 and 194 are disulfide-linked. Residue Asp191 is part of the active site. His204 functions as the Proton donor/acceptor in the catalytic mechanism.

This sequence belongs to the cutinase family. The 2 disulfide bonds play a critical role in holding the catalytic residues in juxta-position; reduction of the disulfide bridges results in the complete inactivation of the enzyme. Post-translationally, the N-terminus is blocked.

Its subcellular location is the secreted. It carries out the reaction cutin + H2O = cutin monomers.. Its activity is regulated as follows. Inhibited by diisopropyl fluorophosphate (DFP). In terms of biological role, catalyzes the hydrolysis of complex carboxylic polyesters found in the cell wall of plants. Degrades cutin, a macromolecule that forms the structure of the plant cuticle. Allows pathogenic fungi to penetrate through the cuticular barrier into the host plant during the initial stage of fungal infection. The sequence is that of Cutinase 1 (CUTA) from Colletotrichum gloeosporioides (Anthracnose fungus).